An 832-amino-acid polypeptide reads, in one-letter code: Mechanosensitive cation channel TMEM63B (832 aa).

Over 1–40 (MLPFLLATLGTTALNNSNPKDYCYSARIRSTVLQGLPFGG) the chain is Extracellular. Residues 41–65 (VPTVLALDFMCFLALLFLFSILRKV) form a helical membrane-spanning segment. C51 carries S-palmitoyl cysteine lipidation. Over 66-145 (AWDYGRLALV…KDDEIRDKCG (80 aa)) the chain is Cytoplasmic. Positions 86–88 (RDR) match the Mediates endoplasmic reticulum retention motif. A phosphoserine mark is found at S111, S113, S114, and S115. The S-palmitoyl cysteine moiety is linked to residue C126. A helical transmembrane segment spans residues 146–178 (GDAVHYLSFQRHIIGLLVVVGVLSVGIVLPVNF). At 179-202 (SGDLLENNAYSFGRTTIANLKSGN) the chain is on the extracellular side. The helical transmembrane segment at 203-227 (NLLWLHTSFAFLYLLLTVYSMRRHT) threads the bilayer. Over 228-427 (SKMRYKEDDL…IYWEHLSIRG (200 aa)) the chain is Cytoplasmic. The intracellular linker IL2; confers mechanosensitivity stretch occupies residues 231–426 (RYKEDDLVKR…NIYWEHLSIR (196 aa)). S-palmitoyl cysteine attachment occurs at residues C382 and C398. The chain crosses the membrane as a helical span at residues 428-457 (FIWWLRCLVINVVLFILLFFLTTPAIIITT). Residues 458–472 (MDKFNVTKPVEYLNN) are Extracellular-facing. An N-linked (GlcNAc...) asparagine glycan is attached at N462. The chain crosses the membrane as a helical span at residues 473–502 (PIITQFFPTLLLWCFSALLPTIVYYSAFFE). The Cytoplasmic segment spans residues 503–506 (AHWT). Residues 507-543 (RSGENRTTMHKCYTFLIFMVLLLPSLGLSSLDLFFRW) form a helical membrane-spanning segment. Residues 544–566 (LFDKKFLAEAAIRFECVFLPDNG) are Extracellular-facing. Residues 567 to 599 (AFFVNYVIASAFIGNAMDLLRIPGLLMYMIRLC) traverse the membrane as a helical segment. Residues 567–599 (AFFVNYVIASAFIGNAMDLLRIPGLLMYMIRLC) are gating helix. At 600-619 (LARSAAERRNVKRHQAYEFQ) the chain is on the cytoplasmic side. The chain crosses the membrane as a helical span at residues 620–638 (FGAAYAWMMCVFTVVMTYS). Topologically, residues 639–641 (ITC) are extracellular. Residues 642-666 (PIIVPFGLMYMLLKHLVDRYNLYYA) form a helical membrane-spanning segment. Residues 667-673 (YLPAKLD) lie on the Cytoplasmic side of the membrane. A helical transmembrane segment spans residues 674-702 (KKIHSGAVNQVVAAPILCLFWLLFFSTMR). Topologically, residues 703–707 (TGFLA) are extracellular. A helical membrane pass occupies residues 708–728 (PTSMFTFVVLVITIVICLCHV). 2 S-palmitoyl cysteine lipidation sites follow: C726 and C729. At 729-832 (CFGHFKYLSA…DSLIENEIHQ (104 aa)) the chain is on the cytoplasmic side. The segment at 780–814 (EVDGDGDGAPGSSGDEPPSSSSQDEELLMPPDALT) is disordered. Over residues 789-801 (PGSSGDEPPSSSS) the composition is skewed to low complexity.

It belongs to the CSC1 (TC 1.A.17) family. Monomer. Interacts with SLC19A2; interaction is required for the phospholipid scramblase activity. Post-translationally, palmitoylation is required for localization to the plasma membrane and stability. N-Glycosylated.

It is found in the cell membrane. The protein resides in the endoplasmic reticulum membrane. The protein localises to the lysosome membrane. Its subcellular location is the early endosome membrane. It carries out the reaction Ca(2+)(in) = Ca(2+)(out). It catalyses the reaction Mg(2+)(in) = Mg(2+)(out). The catalysed reaction is K(+)(in) = K(+)(out). The enzyme catalyses Na(+)(in) = Na(+)(out). It carries out the reaction Cs(+)(in) = Cs(+)(out). It catalyses the reaction a 1,2-diacyl-sn-glycero-3-phosphocholine(in) = a 1,2-diacyl-sn-glycero-3-phosphocholine(out). The catalysed reaction is a sphingomyelin(in) = a sphingomyelin(out). In terms of biological role, mechanosensitive cation channel with low conductance and high activation threshold. Osmosensitive cation channel preferentially activated by hypotonic stress. Also acts as a phospholipid scramblase in response to changes in membrane structure: upon changes in membrane curvature and thickness, alters its conformation and translocates phospholipids, such as phosphatidylcholine and sphingomyelin, thereby controlling plasma membrane lipid distribution. Forms a heterodimer with SLC19A2, which mediates phospholipid scramblase activity following Ca(2+) stimulation. Expressed in excitatory neurons of the subfornical organ and functions as a thirst receptor that mediates neuronal response to hyperosmolality to drive thirst and drinking behavior. Facilitates intestinal motility by promoting proliferation of intestinal stem cells. Essential for the baby's first breath and respiration throughout life. Upon lung inflation conducts cation currents in alveolar type 1 and 2 cells triggering lamellar body exocytosis and surfactant secretion into airspace. Acts as an osmosensor in cochlear outer hair cells (OHCs) where it mediates calcium influx and regulatory volume decrease response. Required for the maintenance of OHC morphology, OHC survival and normal hearing. The protein is Mechanosensitive cation channel TMEM63B of Homo sapiens (Human).